The following is a 170-amino-acid chain: Peptidyl-prolyl cis-trans isomerase ESS1 (170 aa).

Residues 9 to 43 (TGLPTPWTVRYSKSKKREYFFNPETKHSQWEEPEG) enclose the WW domain. A disordered region spans residues 30 to 53 (NPETKHSQWEEPEGTNKDQLHKHL). Basic and acidic residues predominate over residues 32-53 (ETKHSQWEEPEGTNKDQLHKHL). Residues 57 to 170 (PVRVRCLHIL…SGVHVIKRVG (114 aa)) enclose the PpiC domain. Ser161 carries the post-translational modification Phosphoserine.

It belongs to the PpiC/parvulin rotamase family. As to quaternary structure, interacts with the RNA polymerase II largest subunit (RPB1) and with the SIN1-RDP3 HDAC subunit SIN3.

The protein resides in the cytoplasm. Its subcellular location is the nucleus. The enzyme catalyses [protein]-peptidylproline (omega=180) = [protein]-peptidylproline (omega=0). Inhibited by 5-hydroxy-1,4-naphthoquinone (juglone), but not by FK506 or cyclosporin A. Essential PPIase specific for phosphoserine and phosphothreonine N-terminal to the proline residue. Required for efficient pre-mRNA 3'-end processing and transcription termination, probably by inducing conformational changes by proline-directed isomerization in the C-terminal domain (CTD) of RPB1, thereby altering cofactor binding with the RNA polymerase II transcription complex. Also targets the SIN3-RPD3 histone deacetylase complex (HDAC). The polypeptide is Peptidyl-prolyl cis-trans isomerase ESS1 (ESS1) (Saccharomyces cerevisiae (strain ATCC 204508 / S288c) (Baker's yeast)).